A 138-amino-acid chain; its full sequence is Acidic phospholipase A2 beta (138 aa).

Positions 1 to 16 (MRTLWIVAVLLLGVEG) are cleaved as a signal peptide. Cystine bridges form between C42-C131, C44-C60, C59-C111, C65-C138, C66-C104, C73-C97, and C91-C102. Positions 43, 45, and 47 each coordinate Ca(2+). H63 is an active-site residue. D64 contributes to the Ca(2+) binding site. The active site involves D105.

It belongs to the phospholipase A2 family. Group II subfamily. D49 sub-subfamily. As to quaternary structure, dimer. Ca(2+) is required as a cofactor. Expressed by the venom gland.

It is found in the secreted. The catalysed reaction is a 1,2-diacyl-sn-glycero-3-phosphocholine + H2O = a 1-acyl-sn-glycero-3-phosphocholine + a fatty acid + H(+). PLA2 catalyzes the calcium-dependent hydrolysis of the 2-acyl groups in 3-sn-phosphoglycerides. In Crotalus adamanteus (Eastern diamondback rattlesnake), this protein is Acidic phospholipase A2 beta.